Consider the following 298-residue polypeptide: Probable alpha-L-glutamate ligase (298 aa).

The 183-residue stretch at 108-290 (LQLLLKTGVP…IAAEIIDYIE (183 aa)) folds into the ATP-grasp domain. ATP is bound by residues lysine 144, 181-182 (DF), aspartate 190, and 214-216 (RAN). Residues aspartate 251, glutamate 263, and asparagine 265 each contribute to the Mg(2+) site. The Mn(2+) site is built by aspartate 251, glutamate 263, and asparagine 265.

It belongs to the RimK family. Mg(2+) is required as a cofactor. Requires Mn(2+) as cofactor.

The chain is Probable alpha-L-glutamate ligase from Haemophilus influenzae (strain PittEE).